The sequence spans 135 residues: Large ribosomal subunit protein uL16c (135 aa).

Basic residues predominate over residues 1–17; sequence MLSPKRTKFRKQHRNRM. Residues 1–22 form a disordered region; it reads MLSPKRTKFRKQHRNRMNGKAS.

This sequence belongs to the universal ribosomal protein uL16 family. As to quaternary structure, part of the 50S ribosomal subunit.

The protein resides in the plastid. It localises to the chloroplast. The sequence is that of Large ribosomal subunit protein uL16c from Gracilaria tenuistipitata (Red alga).